Reading from the N-terminus, the 263-residue chain is Small ribosomal subunit protein uS2 (263 aa).

The segment covering 230-249 (GEALVNEEKEITDEEKKEVL) has biased composition (basic and acidic residues). Residues 230 to 263 (GEALVNEEKEITDEEKKEVLDEAMSEEDFGEEQE) are disordered. A compositionally biased stretch (acidic residues) spans 250 to 263 (DEAMSEEDFGEEQE).

Belongs to the universal ribosomal protein uS2 family.

This is Small ribosomal subunit protein uS2 from Campylobacter jejuni subsp. jejuni serotype O:2 (strain ATCC 700819 / NCTC 11168).